The primary structure comprises 193 residues: Signal peptidase I T (193 aa).

At 1 to 25 (MTEEKNTNTEKTAKKKTNTYLEWGK) the chain is on the cytoplasmic side. A helical membrane pass occupies residues 26-42 (AIVIAVLLALLIRHFLF). Residues 43–193 (EPYLVEGSSM…FPFNEMRQTK (151 aa)) lie on the Extracellular side of the membrane. Active-site residues include serine 51 and lysine 93.

Belongs to the peptidase S26 family.

Its subcellular location is the cell membrane. It carries out the reaction Cleavage of hydrophobic, N-terminal signal or leader sequences from secreted and periplasmic proteins.. The polypeptide is Signal peptidase I T (sipT) (Bacillus subtilis (strain 168)).